The primary structure comprises 469 residues: MAGKTLYDKLWNSHVVRTNPGGTALLYIDRHLVHEVTSPQAFEGLRLAGRKPWRKGANLAVPDHNVPTTDRSQGIQDPISRIQVEALDRNCQELGLTEFRMDDPRQGIVHIVGPEQGATLPGMTVVCGDSHTATHGAFGALAFGIGTSEVEHVLATQCLLQKKSKNMLIQVSGKLAPGVYSKDLILAIIARIGTAGGTGYTIEFAGETIRALSMEGRMTLCNMAIEAGARAGLVAVDETTIDYLKGRPFAPSPHSWGQAVNAWQMLQSDPDASFDRVVTIDAAALKPQVSWGTSPEMVASIDGRVPDPRQESDPTKRGGMERALEYMGLAANTPISEIRPDIIFIGSCTNARIEDLREAAKVVAGHKVAGNIKQALVVPGSGLVKRQAETEGLDQIFKEAGFEWREPGCSMCLAMNADRLEPEERCASTSNRNFEGRQGQGGRTHLVSPAMAAAAAVAGHFTDVSTLNH.

[4Fe-4S] cluster contacts are provided by cysteine 348, cysteine 409, and cysteine 412.

It belongs to the aconitase/IPM isomerase family. LeuC type 1 subfamily. In terms of assembly, heterodimer of LeuC and LeuD. [4Fe-4S] cluster is required as a cofactor.

It catalyses the reaction (2R,3S)-3-isopropylmalate = (2S)-2-isopropylmalate. Its pathway is amino-acid biosynthesis; L-leucine biosynthesis; L-leucine from 3-methyl-2-oxobutanoate: step 2/4. Catalyzes the isomerization between 2-isopropylmalate and 3-isopropylmalate, via the formation of 2-isopropylmaleate. This is 3-isopropylmalate dehydratase large subunit from Nitrosococcus oceani (strain ATCC 19707 / BCRC 17464 / JCM 30415 / NCIMB 11848 / C-107).